An 837-amino-acid polypeptide reads, in one-letter code: Ribosome biogenesis ATPase RIX7 (837 aa).

2 disordered regions span residues 36–56 and 149–207; these read RSLRQESQGEEGENNEGEEDE and ITST…LKSL. Ser42 is modified (phosphoserine). Residues 43 to 56 are compositionally biased toward acidic residues; that stretch reads QGEEGENNEGEEDE. A compositionally biased stretch (polar residues) spans 149 to 163; that stretch reads ITSTWSKSGSVSESI. The segment covering 176–192 has biased composition (basic residues); that stretch reads KSKKRSKEGTCKVKRQK. 246–253 contributes to the ATP binding site; sequence GPPGCGKT. The disordered stretch occupies residues 443–468; that stretch reads PTTATDSSEDNMEIDETANGDESSLK. The span at 449 to 461 shows a compositional bias: acidic residues; it reads SSEDNMEIDETAN. Residue 574–581 participates in ATP binding; sequence GPPGCGKT.

This sequence belongs to the AAA ATPase family.

It localises to the nucleus. The protein resides in the nucleolus. Its function is as follows. Involved in ribosome biogenesis. Seems to be required for restructuring nucleoplasmic 60S pre-ribosomal particles to make them competent for nuclear export. The polypeptide is Ribosome biogenesis ATPase RIX7 (RIX7) (Saccharomyces cerevisiae (strain ATCC 204508 / S288c) (Baker's yeast)).